The chain runs to 313 residues: Ribosomal RNA small subunit methyltransferase H (313 aa).

S-adenosyl-L-methionine-binding positions include 35–37 (GGH), aspartate 55, phenylalanine 80, aspartate 102, and glutamine 109.

The protein belongs to the methyltransferase superfamily. RsmH family.

The protein resides in the cytoplasm. The catalysed reaction is cytidine(1402) in 16S rRNA + S-adenosyl-L-methionine = N(4)-methylcytidine(1402) in 16S rRNA + S-adenosyl-L-homocysteine + H(+). Functionally, specifically methylates the N4 position of cytidine in position 1402 (C1402) of 16S rRNA. The protein is Ribosomal RNA small subunit methyltransferase H of Shewanella oneidensis (strain ATCC 700550 / JCM 31522 / CIP 106686 / LMG 19005 / NCIMB 14063 / MR-1).